A 232-amino-acid chain; its full sequence is Ion-translocating oxidoreductase complex subunit E (232 aa).

The next 6 membrane-spanning stretches (helical) occupy residues 18 to 38 (GLVQLLGLCPLLAVTATITNA), 39 to 59 (LGLGLATMLVLIGSNILVSLV), 69 to 89 (IPVFVMIIAALVTTVQLLINA), 93 to 113 (GLYLSLGIFLPLIVTNCIIIG), 127 to 147 (AAFDGLMMGLGFTLVLTVLGA), and 182 to 202 (PFLLAMLPPGAFIVMGLLIAL).

The protein belongs to the NqrDE/RnfAE family. As to quaternary structure, the complex is composed of six subunits: RnfA, RnfB, RnfC, RnfD, RnfE and RnfG.

It is found in the cell inner membrane. Functionally, part of a membrane-bound complex that couples electron transfer with translocation of ions across the membrane. The protein is Ion-translocating oxidoreductase complex subunit E of Shewanella baltica (strain OS185).